Consider the following 65-residue polypeptide: Large ribosomal subunit protein bL35 (65 aa).

Belongs to the bacterial ribosomal protein bL35 family.

This is Large ribosomal subunit protein bL35 from Thermoanaerobacter pseudethanolicus (strain ATCC 33223 / 39E) (Clostridium thermohydrosulfuricum).